The primary structure comprises 543 residues: Carotenoid 9,10(9',10')-cleavage dioxygenase 1 (543 aa).

His-224, His-272, His-338, and His-528 together coordinate Fe cation.

Belongs to the carotenoid oxygenase family. As to quaternary structure, homodimer. Requires Fe(2+) as cofactor.

The enzyme catalyses all-trans-zeaxanthin + 2 O2 = 4,9-dimethyldodeca-2,4,6,8,10-pentaenedial + 2 (3R)-hydroxy-beta-ionone. Functionally, cleaves a variety of carotenoids at the 9-10 and 9'-10' double bonds. Probably not involved in abscisic acid biosynthesis. The protein is Carotenoid 9,10(9',10')-cleavage dioxygenase 1 (CCD1) of Phaseolus vulgaris (Kidney bean).